We begin with the raw amino-acid sequence, 83 residues long: Cytochrome b559 subunit alpha (83 aa).

The chain crosses the membrane as a helical span at residues 21–35 (VIHSITIPSLFIAGW). His-23 lines the heme pocket.

Belongs to the PsbE/PsbF family. Heterodimer of an alpha subunit and a beta subunit. PSII is composed of 1 copy each of membrane proteins PsbA, PsbB, PsbC, PsbD, PsbE, PsbF, PsbH, PsbI, PsbJ, PsbK, PsbL, PsbM, PsbT, PsbX, PsbY, PsbZ, Psb30/Ycf12, at least 3 peripheral proteins of the oxygen-evolving complex and a large number of cofactors. It forms dimeric complexes. It depends on heme b as a cofactor.

Its subcellular location is the plastid. The protein resides in the chloroplast thylakoid membrane. Its function is as follows. This b-type cytochrome is tightly associated with the reaction center of photosystem II (PSII). PSII is a light-driven water:plastoquinone oxidoreductase that uses light energy to abstract electrons from H(2)O, generating O(2) and a proton gradient subsequently used for ATP formation. It consists of a core antenna complex that captures photons, and an electron transfer chain that converts photonic excitation into a charge separation. This chain is Cytochrome b559 subunit alpha, found in Anthoceros angustus (Hornwort).